The following is a 281-amino-acid chain: Alcohol dehydrogenase-related 31 kDa protein (281 aa).

Residue 11 to 34 (YVADCGGIALETSKVLMTKNIAKL) participates in NAD(+) binding. A substrate-binding site is contributed by serine 139. The active-site Proton acceptor is the tyrosine 152.

The protein belongs to the short-chain dehydrogenases/reductases (SDR) family.

The chain is Alcohol dehydrogenase-related 31 kDa protein (Adhr) from Drosophila ambigua (Fruit fly).